We begin with the raw amino-acid sequence, 496 residues long: L-arabinose isomerase (496 aa).

Residues Glu305, Glu330, His347, and His446 each contribute to the Mn(2+) site.

It belongs to the arabinose isomerase family. Mn(2+) serves as cofactor.

The enzyme catalyses beta-L-arabinopyranose = L-ribulose. Its pathway is carbohydrate degradation; L-arabinose degradation via L-ribulose; D-xylulose 5-phosphate from L-arabinose (bacterial route): step 1/3. In terms of biological role, catalyzes the conversion of L-arabinose to L-ribulose. The chain is L-arabinose isomerase from Bacillus subtilis (strain 168).